The chain runs to 258 residues: F-box/SPRY domain-containing protein 1 (258 aa).

The region spanning 6–54 is the F-box domain; the sequence is MEYAPNIPDNVLELIFSFLKLQDLRNCTLVCKSWYRFFCDENNEVWRAQ. One can recognise a B30.2/SPRY domain in the interval 64-256; sequence FKNDLLTVVP…ISMVYLGAPL (193 aa).

The protein belongs to the FBXO45/Fsn family. As to quaternary structure, component of an E3 ubiquitin ligase complex composed of hiw and Fsn.

It localises to the synapse. Its pathway is protein modification; protein ubiquitination. Its function is as follows. Required in the presynaptic motoneuron to down-regulate the levels of wnd and restrain synaptic terminal growth at the neuromuscular junction (NMJ). The polypeptide is F-box/SPRY domain-containing protein 1 (Anopheles gambiae (African malaria mosquito)).